A 318-amino-acid polypeptide reads, in one-letter code: tRNA dimethylallyltransferase (318 aa).

9-16 is a binding site for ATP; sequence GATASGKT. Residue 11 to 16 coordinates substrate; it reads TASGKT. Interaction with substrate tRNA stretches follow at residues 34 to 37 and 158 to 162; these read DSAQ and QRIIR.

The protein belongs to the IPP transferase family. In terms of assembly, monomer. Mg(2+) is required as a cofactor.

It catalyses the reaction adenosine(37) in tRNA + dimethylallyl diphosphate = N(6)-dimethylallyladenosine(37) in tRNA + diphosphate. Catalyzes the transfer of a dimethylallyl group onto the adenine at position 37 in tRNAs that read codons beginning with uridine, leading to the formation of N6-(dimethylallyl)adenosine (i(6)A). The protein is tRNA dimethylallyltransferase of Dichelobacter nodosus (strain VCS1703A).